Reading from the N-terminus, the 150-residue chain is MNDRARARKLADRIKVVVAETLERRVKDPRLGFVTITDARVTPDLREATVFYTVLGDDTALAETAAALESAKGVLRAEVGRQTQVRFTPTLTFVPDTVPRQARQIEELLARARAADREVAERAKSAQPAGEPDPYRFDGAAAADDDEPAT.

Residues 119–150 (VAERAKSAQPAGEPDPYRFDGAAAADDDEPAT) are disordered.

It belongs to the RbfA family. In terms of assembly, monomer. Binds 30S ribosomal subunits, but not 50S ribosomal subunits or 70S ribosomes.

Its subcellular location is the cytoplasm. One of several proteins that assist in the late maturation steps of the functional core of the 30S ribosomal subunit. Associates with free 30S ribosomal subunits (but not with 30S subunits that are part of 70S ribosomes or polysomes). Required for efficient processing of 16S rRNA. May interact with the 5'-terminal helix region of 16S rRNA. The protein is Ribosome-binding factor A of Acidothermus cellulolyticus (strain ATCC 43068 / DSM 8971 / 11B).